The primary structure comprises 1178 residues: Dual specificity mitogen-activated protein kinase kinase hemipterous (1178 aa).

2 disordered regions span residues 74 to 103 and 115 to 148; these read SGSG…SSSS and ATGT…GGGL. Low complexity-rich tracts occupy residues 91–103 and 115–128; these read ATPF…SSSS and ATGT…PPTT. In terms of domain architecture, Protein kinase spans 197–456; sequence LKHLGDLGNG…YPELLAQPFI (260 aa). Residues 203–211 and K226 each bind ATP; that span reads LGNGTSGNV. The active-site Proton acceptor is D320. Phosphoserine is present on S348. At T352 the chain carries Phosphothreonine. Residues 522 to 648 are disordered; it reads TYAGQSPTNP…DESPKKESMF (127 aa). Positions 523–543 are enriched in polar residues; that stretch reads YAGQSPTNPQKTIKPTQIPSY. Residues 544–570 are compositionally biased toward low complexity; that stretch reads QQQQSQFFMQSATQLPQTTTTTPTATT. Positions 574–593 are enriched in gly residues; the sequence is GGSGNGNGRGNGSGGSGNGS. The span at 594–608 shows a compositional bias: low complexity; sequence GSSSSASPLSPPSAG. The span at 636–646 shows a compositional bias: basic and acidic residues; that stretch reads KYNDESPKKES. 2 positions are modified to phosphoserine: S646 and S662. Disordered stretches follow at residues 715–783, 797–851, 912–933, 999–1026, 1042–1108, and 1122–1178; these read TTTP…LQPG, QNQL…STCS, GTSP…GNGN, TSPV…VVNN, SSSS…NRGQ, and GQPP…TIDQ. Residues 724-734 are compositionally biased toward polar residues; sequence TENSQAYDSCD. 3 stretches are compositionally biased toward low complexity: residues 735 to 783, 808 to 817, and 837 to 851; these read SSSN…LQPG, RYQQQRQQPP, and THST…STCS. Residues 912 to 928 show a composition bias toward polar residues; it reads GTSPTLQSRSPEQQSDY. Low complexity predominate over residues 1042 to 1055; that stretch reads SSSSNTSQSTSPTT. S1150 and S1154 each carry phosphoserine. Residues 1168 to 1178 show a composition bias toward basic and acidic residues; that stretch reads PQRRIYRTIDQ.

This sequence belongs to the protein kinase superfamily. STE Ser/Thr protein kinase family. MAP kinase kinase subfamily. Post-translationally, MAPKK is itself dependent on Ser/Thr phosphorylation for activity catalyzed by MAP kinase kinase kinases. In terms of processing, weakly autophosphorylated.

The enzyme catalyses L-seryl-[protein] + ATP = O-phospho-L-seryl-[protein] + ADP + H(+). The catalysed reaction is L-threonyl-[protein] + ATP = O-phospho-L-threonyl-[protein] + ADP + H(+). It catalyses the reaction L-tyrosyl-[protein] + ATP = O-phospho-L-tyrosyl-[protein] + ADP + H(+). Its function is as follows. Required for the epithelial cell sheet movement called dorsal closure (DC), which allows establishment of the dorsal epidermis. Controls the expression in the dorsal epithelium edges of another dorsal closure gene, puckered (puc). Phosphorylates and activates the MAP kinase bsk; bsk signal transduction pathway mediates an immune response and morphogenesis. The polypeptide is Dual specificity mitogen-activated protein kinase kinase hemipterous (hep) (Drosophila melanogaster (Fruit fly)).